The following is a 183-amino-acid chain: Efficient mitochondria targeting-associated protein 19 (183 aa).

Residues 1–25 are Cytoplasmic-facing; the sequence is MKVVSLRRIYSSEIYKLPTTRLHMD. Residues 24 to 156 enclose the EXPERA domain; sequence MDTLYYYYFV…PYLAIPLWMA (133 aa). A helical transmembrane segment spans residues 26 to 46; the sequence is TLYYYYFVSHLAAALFVDLPI. The Lumenal segment spans residues 47–81; the sequence is TEWLGGSLSCLSGLRRFYLSTYEDPILLIPAPWKT. The chain crosses the membrane as a helical span at residues 82–102; the sequence is ALFSSELFFQVPFFIWVSLRL. Residues 103–110 lie on the Cytoplasmic side of the membrane; the sequence is RKKARDPV. Residues 111-131 traverse the membrane as a helical segment; the sequence is LWVAILIYGVHAFTTTWCCMF. The Lumenal portion of the chain corresponds to 132 to 138; it reads ELFAEKK. A helical transmembrane segment spans residues 139–159; that stretch reads WMIMSFYFPYLAIPLWMAIDM. Topologically, residues 160–183 are cytoplasmic; the sequence is GGRLVKSCHAAKSGPSSTITSKSD.

It belongs to the TMEM97/sigma-2 receptor family.

The protein localises to the endoplasmic reticulum membrane. Part of an import route for newly synthesized mitochondrial proteins termed the ER-SURF pathway (ER surface-mediated protein targeting), which retrieves mitochondrial precursor proteins from the ER surface and reroutes them to mitochondria for efficient mitochondrial import. Acts as a quality control factor in the ER, promoting the proteolytic degradation of nonproductive and extramitochondrial precursor proteins in the ER membrane thus removing them from the ER surface. The chain is Efficient mitochondria targeting-associated protein 19 (ema19) from Schizosaccharomyces pombe (strain 972 / ATCC 24843) (Fission yeast).